Here is a 236-residue protein sequence, read N- to C-terminus: EF-hand domain-containing protein D1 (236 aa).

The disordered stretch occupies residues 1 to 48 (MASEELASKLQRRLQWEEGDSGLQPAPGAAPDPEPQPQPPAWAPTARA). Pro residues predominate over residues 28–42 (GAAPDPEPQPQPPAW). EF-hand domains follow at residues 87-122 (RLIKDLESMFKLYDAGRDGFIDLMELKLMMEKLGAP) and 123-158 (QTHLGLKSMIKEVDEDFDGKLSFREFLLIFHKAAAG). 8 residues coordinate Ca(2+): Asp100, Asp104, Glu111, Asp136, Asp138, Asp140, Lys142, and Glu147.

Its subcellular location is the mitochondrion inner membrane. Functionally, acts as a calcium sensor for mitochondrial flash (mitoflash) activation, an event characterized by stochastic bursts of superoxide production. May play a role in neuronal differentiation. This is EF-hand domain-containing protein D1 (EFHD1) from Bos taurus (Bovine).